Here is a 187-residue protein sequence, read N- to C-terminus: ATP synthase subunit b 2 (187 aa).

The tract at residues 1–25 is disordered; sequence MAESHGGAKGPAAGAHTGAEGGHGG. The chain crosses the membrane as a helical span at residues 39–59; sequence LVSLAIFFVVLYVIVSKLALP. The segment at 103–122 is disordered; the sequence is RAQAIGNESRDKANAQAETE. Basic and acidic residues predominate over residues 110–122; the sequence is ESRDKANAQAETE.

Belongs to the ATPase B chain family. In terms of assembly, F-type ATPases have 2 components, F(1) - the catalytic core - and F(0) - the membrane proton channel. F(1) has five subunits: alpha(3), beta(3), gamma(1), delta(1), epsilon(1). F(0) has three main subunits: a(1), b(2) and c(10-14). The alpha and beta chains form an alternating ring which encloses part of the gamma chain. F(1) is attached to F(0) by a central stalk formed by the gamma and epsilon chains, while a peripheral stalk is formed by the delta and b chains.

Its subcellular location is the cell inner membrane. Functionally, f(1)F(0) ATP synthase produces ATP from ADP in the presence of a proton or sodium gradient. F-type ATPases consist of two structural domains, F(1) containing the extramembraneous catalytic core and F(0) containing the membrane proton channel, linked together by a central stalk and a peripheral stalk. During catalysis, ATP synthesis in the catalytic domain of F(1) is coupled via a rotary mechanism of the central stalk subunits to proton translocation. In terms of biological role, component of the F(0) channel, it forms part of the peripheral stalk, linking F(1) to F(0). The b'-subunit is a diverged and duplicated form of b found in plants and photosynthetic bacteria. The polypeptide is ATP synthase subunit b 2 (atpF2) (Bradyrhizobium diazoefficiens (strain JCM 10833 / BCRC 13528 / IAM 13628 / NBRC 14792 / USDA 110)).